A 709-amino-acid chain; its full sequence is Polyribonucleotide nucleotidyltransferase (709 aa).

Mg(2+)-binding residues include Asp-485 and Asp-491. In terms of domain architecture, KH spans 552–611; that stretch reads PRIYTMKIDPKKIKDVIGKGGATIRSLTEETGTSIDIDDDGTVKIAAVDSNAAKNVMGRI. One can recognise an S1 motif domain in the interval 621-689; that stretch reads GAIYKGKVTR…RQGRIRLTMK (69 aa).

The protein belongs to the polyribonucleotide nucleotidyltransferase family. As to quaternary structure, component of the RNA degradosome, which is a multiprotein complex involved in RNA processing and mRNA degradation. Mg(2+) is required as a cofactor.

Its subcellular location is the cytoplasm. The catalysed reaction is RNA(n+1) + phosphate = RNA(n) + a ribonucleoside 5'-diphosphate. In terms of biological role, involved in mRNA degradation. Catalyzes the phosphorolysis of single-stranded polyribonucleotides processively in the 3'- to 5'-direction. This Haemophilus influenzae (strain PittGG) protein is Polyribonucleotide nucleotidyltransferase.